The sequence spans 134 residues: MRSLFYIAVAVAVFARSSAVAAFTNADDSQLLSKTTPDFATDAMASSDSRKRFLRATDPEDGDLQADDEERTKFKSLADIIKHLDDQDMKHVAGILANMDDIHHKNVLAKALESGRITQKNYDDAIAALQRTSK.

Positions 1–22 (MRSLFYIAVAVAVFARSSAVAA) are cleaved as a signal peptide. Residues 43–65 (AMASSDSRKRFLRATDPEDGDLQ) are disordered. Basic and acidic residues predominate over residues 48–58 (DSRKRFLRATD). The RxLR-dEER signature appears at 52–71 (RFLRATDPEDGDLQADDEER).

Belongs to the RxLR effector family.

Its subcellular location is the secreted. In terms of biological role, effector that enhances plant susceptibility to P.parasitica in Nicotiana benthamiana and Arabidopsis thaliana. Triggers non-specific cell death in a variety of plants, including tobacco, tomato, potato and A.thaliana. E4-induced cell death is dependent on HSP90, NPK and SGT1, suggesting that PpE4 is recognized by the plant immune system. The protein is RxLR effector protein 4 of Phytophthora nicotianae (strain INRA-310) (Phytophthora parasitica).